We begin with the raw amino-acid sequence, 218 residues long: uncharacterized protein (218 aa).

The 83-residue stretch at 111 to 193 folds into the Toprim domain; the sequence is NSIYLVEGDF…ITKVIEIKAA (83 aa).

This is an uncharacterized protein from Mycoplasma genitalium (strain ATCC 33530 / DSM 19775 / NCTC 10195 / G37) (Mycoplasmoides genitalium).